We begin with the raw amino-acid sequence, 316 residues long: Transaldolase (316 aa).

Residue Lys132 is the Schiff-base intermediate with substrate of the active site.

It belongs to the transaldolase family. Type 1 subfamily. As to quaternary structure, homodimer.

Its subcellular location is the cytoplasm. The catalysed reaction is D-sedoheptulose 7-phosphate + D-glyceraldehyde 3-phosphate = D-erythrose 4-phosphate + beta-D-fructose 6-phosphate. It functions in the pathway carbohydrate degradation; pentose phosphate pathway; D-glyceraldehyde 3-phosphate and beta-D-fructose 6-phosphate from D-ribose 5-phosphate and D-xylulose 5-phosphate (non-oxidative stage): step 2/3. In terms of biological role, transaldolase is important for the balance of metabolites in the pentose-phosphate pathway. This is Transaldolase from Methylobacillus flagellatus (strain ATCC 51484 / DSM 6875 / VKM B-1610 / KT).